The following is a 155-amino-acid chain: SsrA-binding protein (155 aa).

Residues 135–147 (TIKRRDQERDIKK) show a composition bias toward basic and acidic residues. A disordered region spans residues 135-155 (TIKRRDQERDIKKQMKHYNAR).

The protein belongs to the SmpB family.

The protein resides in the cytoplasm. Its function is as follows. Required for rescue of stalled ribosomes mediated by trans-translation. Binds to transfer-messenger RNA (tmRNA), required for stable association of tmRNA with ribosomes. tmRNA and SmpB together mimic tRNA shape, replacing the anticodon stem-loop with SmpB. tmRNA is encoded by the ssrA gene; the 2 termini fold to resemble tRNA(Ala) and it encodes a 'tag peptide', a short internal open reading frame. During trans-translation Ala-aminoacylated tmRNA acts like a tRNA, entering the A-site of stalled ribosomes, displacing the stalled mRNA. The ribosome then switches to translate the ORF on the tmRNA; the nascent peptide is terminated with the 'tag peptide' encoded by the tmRNA and targeted for degradation. The ribosome is freed to recommence translation, which seems to be the essential function of trans-translation. The polypeptide is SsrA-binding protein (Streptococcus pyogenes serotype M6 (strain ATCC BAA-946 / MGAS10394)).